Consider the following 334-residue polypeptide: Putative violet-sensitive opsin (334 aa).

The Extracellular segment spans residues 1–29 (MGKYFYLYENISKVGPYDGPQYYLAPTWA). Asn-10 carries N-linked (GlcNAc...) asparagine glycosylation. The helical transmembrane segment at 30–54 (FYLQAAFMGFVFFVGTPLNFVVLLA) threads the bilayer. The Cytoplasmic portion of the chain corresponds to 55–66 (TAKYKKLRVPLN). A helical membrane pass occupies residues 67-88 (YILVNITFAGFIFVTFSVSQVF). Residues 89-106 (LASVRGYYFFGQTLCALE) lie on the Extracellular side of the membrane. A disulfide bridge connects residues Cys-103 and Cys-179. Residues 107-126 (AAVGAVAGLVTSWSLAVLSF) traverse the membrane as a helical segment. The Cytoplasmic segment spans residues 127–145 (ERYLVICKPFGAFKFGSNH). Residues 146 to 168 (ALAAVIFTWFMGVVRCPPFFGWS) traverse the membrane as a helical segment. Topologically, residues 169 to 194 (RYIPEGLGCSCGPDWYTNCEEFSCAS) are extracellular. A helical membrane pass occupies residues 195-222 (YSKFLLVTCFICPITIIIFSYSQLLGAL). The Cytoplasmic segment spans residues 223–244 (RAVAAQQAESASTQKAEKEVSR). Residues 245-272 (MIIVMVASFVTCYGPYALTAQYYAYSQD) traverse the membrane as a helical segment. Over 273 to 279 (ENKDYRL) the chain is Extracellular. The helical transmembrane segment at 280 to 301 (VTIPAFFSKSSCVYNPLIYAFM) threads the bilayer. Lys-288 bears the N6-(retinylidene)lysine mark. At 302–334 (NKQFNGCIMEMVFGKKMEEASEVSSKTEVSTDS) the chain is on the cytoplasmic side.

It belongs to the G-protein coupled receptor 1 family. Opsin subfamily. In terms of processing, phosphorylated on some or all of the serine and threonine residues present in the C-terminal region. As to expression, the three color pigments are found in the cone photoreceptor cells.

The protein resides in the membrane. In terms of biological role, visual pigments are the light-absorbing molecules that mediate vision. They consist of an apoprotein, opsin, covalently linked to cis-retinal. This is Putative violet-sensitive opsin from Oryzias latipes (Japanese rice fish).